The following is a 331-amino-acid chain: Nucleotide sugar transporter SLC35B4 (331 aa).

Helical transmembrane passes span 4–24 (ALAV…LELL), 30–50 (GCGN…GFLF), 59–79 (PAIP…VSVV), 92–112 (LHMI…IIIL), 117–137 (SIFK…CTFM), 153–173 (GFQA…ALLM), 201–221 (ALPL…AVLF), 229–249 (IPVI…NIIT), 251–267 (YVCI…CASL), 268–288 (TVTL…ILYF), and 291–311 (PFTL…LMYT). The short motif at 326-331 (KDSKKN) is the Mediates endoplasmic reticulum retention element.

Belongs to the nucleotide-sugar transporter family. SLC35B subfamily.

It is found in the endoplasmic reticulum membrane. The catalysed reaction is UDP-N-acetyl-alpha-D-glucosamine(in) + UDP-alpha-D-glucuronate(out) = UDP-N-acetyl-alpha-D-glucosamine(out) + UDP-alpha-D-glucuronate(in). It catalyses the reaction UDP-alpha-D-xylose(in) + UDP-alpha-D-glucuronate(out) = UDP-alpha-D-xylose(out) + UDP-alpha-D-glucuronate(in). Antiporter that transports nucleotide sugars across the endoplasmic reticulum (ER) membrane in exchange for another nucleotide sugar. May couple UDP-alpha-D-glucuronate (UDP-GlcA) or UDP-alpha-D-xylose (UDP-Xyl) efflux to UDP-alpha-D-glucuronate (UDP-GlcA) influx into the ER lumen, which in turn stimulates glucuronidation and excretion of endobiotics and xenobiotics. Functionally, has UDP-GlcA:UDP-GlcNAc antiporter activity. The polypeptide is Nucleotide sugar transporter SLC35B4 (SLC35B4) (Homo sapiens (Human)).